The following is a 173-amino-acid chain: Glutamyl-tRNA(Gln) amidotransferase subunit C, mitochondrial (173 aa).

It belongs to the GatC family. As to quaternary structure, subunit of the heterotrimeric GatCAB amidotransferase (AdT) complex, composed of A, B and C subunits.

It is found in the mitochondrion. It carries out the reaction L-glutamyl-tRNA(Gln) + L-glutamine + ATP + H2O = L-glutaminyl-tRNA(Gln) + L-glutamate + ADP + phosphate + H(+). In terms of biological role, allows the formation of correctly charged Gln-tRNA(Gln) through the transamidation of misacylated Glu-tRNA(Gln) in the mitochondria. The reaction takes place in the presence of glutamine and ATP through an activated gamma-phospho-Glu-tRNA(Gln). The sequence is that of Glutamyl-tRNA(Gln) amidotransferase subunit C, mitochondrial from Drosophila persimilis (Fruit fly).